Here is a 325-residue protein sequence, read N- to C-terminus: uncharacterized protein (325 aa).

The helical transmembrane segment at 10–30 (IVFVSLAALVLLVSVSVFIYH) threads the bilayer. In terms of domain architecture, AB hydrolase-1 spans 94 to 166 (KIAVVDRAGY…EIKAIIAMDI (73 aa)).

The protein localises to the cell membrane. This is an uncharacterized protein from Bacillus subtilis (strain 168).